A 1415-amino-acid polypeptide reads, in one-letter code: DNA-directed RNA polymerase subunit beta' (1415 aa).

Zn(2+) contacts are provided by cysteine 70, cysteine 72, cysteine 85, and cysteine 88. Residues aspartate 461, aspartate 463, and aspartate 465 each coordinate Mg(2+). Positions 820, 894, 901, and 904 each coordinate Zn(2+). A disordered region spans residues 1382 to 1415 (ERERAQAIADEEQSLFIEPPPVVQATTEGEGDNA).

This sequence belongs to the RNA polymerase beta' chain family. The RNAP catalytic core consists of 2 alpha, 1 beta, 1 beta' and 1 omega subunit. When a sigma factor is associated with the core the holoenzyme is formed, which can initiate transcription. Mg(2+) serves as cofactor. It depends on Zn(2+) as a cofactor.

The enzyme catalyses RNA(n) + a ribonucleoside 5'-triphosphate = RNA(n+1) + diphosphate. Functionally, DNA-dependent RNA polymerase catalyzes the transcription of DNA into RNA using the four ribonucleoside triphosphates as substrates. The protein is DNA-directed RNA polymerase subunit beta' of Cupriavidus pinatubonensis (strain JMP 134 / LMG 1197) (Cupriavidus necator (strain JMP 134)).